Reading from the N-terminus, the 179-residue chain is ADP-ribosylation factor-like protein 5A (179 aa).

A lipid anchor (N-myristoyl glycine) is attached at glycine 2. GTP contacts are provided by residues 23–30 (GLDNAGKT), 66–70 (DIGGQ), 125–128 (NKQD), and alanine 159.

The protein belongs to the small GTPase superfamily. Arf family. Low amounts were found in most tissues examined with highest levels in brain, intestine and thymus.

Functionally, lacks ADP-ribosylation enhancing activity. The sequence is that of ADP-ribosylation factor-like protein 5A (Arl5a) from Rattus norvegicus (Rat).